The primary structure comprises 293 residues: Protease HtpX homolog (293 aa).

The next 2 helical transmembrane spans lie at 7 to 26 and 30 to 49; these read ASLL…ALLG and GMVM…WYYS. Histidine 131 contributes to the Zn(2+) binding site. Glutamate 132 is a catalytic residue. Residue histidine 135 participates in Zn(2+) binding. Helical transmembrane passes span 148–168 and 180–200; these read ATLA…FWFF and IGAL…QLGI. Glutamate 205 is a Zn(2+) binding site.

This sequence belongs to the peptidase M48B family. The cofactor is Zn(2+).

It is found in the cell inner membrane. This chain is Protease HtpX homolog, found in Acaryochloris marina (strain MBIC 11017).